The sequence spans 388 residues: Succinate--CoA ligase [ADP-forming] subunit beta (388 aa).

The region spanning 9–244 (KQLFARYGLP…QSQEDPREAQ (236 aa)) is the ATP-grasp domain. ATP-binding positions include K46, 53 to 55 (GRG), E99, T102, and E107. Mg(2+)-binding residues include N199 and D213. Residues N264 and 321-323 (GIV) contribute to the substrate site.

This sequence belongs to the succinate/malate CoA ligase beta subunit family. Heterotetramer of two alpha and two beta subunits. The cofactor is Mg(2+).

It catalyses the reaction succinate + ATP + CoA = succinyl-CoA + ADP + phosphate. The catalysed reaction is GTP + succinate + CoA = succinyl-CoA + GDP + phosphate. It functions in the pathway carbohydrate metabolism; tricarboxylic acid cycle; succinate from succinyl-CoA (ligase route): step 1/1. Functionally, succinyl-CoA synthetase functions in the citric acid cycle (TCA), coupling the hydrolysis of succinyl-CoA to the synthesis of either ATP or GTP and thus represents the only step of substrate-level phosphorylation in the TCA. The beta subunit provides nucleotide specificity of the enzyme and binds the substrate succinate, while the binding sites for coenzyme A and phosphate are found in the alpha subunit. This chain is Succinate--CoA ligase [ADP-forming] subunit beta, found in Salmonella choleraesuis (strain SC-B67).